Reading from the N-terminus, the 925-residue chain is Isoleucine--tRNA ligase (925 aa).

The 'HIGH' region signature appears at 57–67 (PYANGDIHMGH). Glu556 is a binding site for L-isoleucyl-5'-AMP. Residues 597–601 (KMSKS) carry the 'KMSKS' region motif. Lys600 lines the ATP pocket. 4 residues coordinate Zn(2+): Cys890, Cys893, Cys910, and Cys913.

This sequence belongs to the class-I aminoacyl-tRNA synthetase family. IleS type 1 subfamily. As to quaternary structure, monomer. Requires Zn(2+) as cofactor.

It localises to the cytoplasm. The enzyme catalyses tRNA(Ile) + L-isoleucine + ATP = L-isoleucyl-tRNA(Ile) + AMP + diphosphate. Catalyzes the attachment of isoleucine to tRNA(Ile). As IleRS can inadvertently accommodate and process structurally similar amino acids such as valine, to avoid such errors it has two additional distinct tRNA(Ile)-dependent editing activities. One activity is designated as 'pretransfer' editing and involves the hydrolysis of activated Val-AMP. The other activity is designated 'posttransfer' editing and involves deacylation of mischarged Val-tRNA(Ile). The chain is Isoleucine--tRNA ligase from Carboxydothermus hydrogenoformans (strain ATCC BAA-161 / DSM 6008 / Z-2901).